Here is a 335-residue protein sequence, read N- to C-terminus: Glycerol-3-phosphate dehydrogenase [NAD(P)+] (335 aa).

Residues S12, W13, and K107 each coordinate NADPH. Sn-glycerol 3-phosphate is bound by residues K107, G138, and S140. Residue A142 participates in NADPH binding. Sn-glycerol 3-phosphate contacts are provided by K193, D246, S256, R257, and N258. K193 acts as the Proton acceptor in catalysis. Position 257 (R257) interacts with NADPH. NADPH is bound by residues V281 and E283.

This sequence belongs to the NAD-dependent glycerol-3-phosphate dehydrogenase family.

Its subcellular location is the cytoplasm. It carries out the reaction sn-glycerol 3-phosphate + NAD(+) = dihydroxyacetone phosphate + NADH + H(+). The catalysed reaction is sn-glycerol 3-phosphate + NADP(+) = dihydroxyacetone phosphate + NADPH + H(+). It participates in membrane lipid metabolism; glycerophospholipid metabolism. Catalyzes the reduction of the glycolytic intermediate dihydroxyacetone phosphate (DHAP) to sn-glycerol 3-phosphate (G3P), the key precursor for phospholipid synthesis. The sequence is that of Glycerol-3-phosphate dehydrogenase [NAD(P)+] from Geobacter metallireducens (strain ATCC 53774 / DSM 7210 / GS-15).